A 495-amino-acid chain; its full sequence is Ferruginol synthase (495 aa).

Met1 is a topological domain (lumenal). A helical transmembrane segment spans residues 2-22; the sequence is DSFPLLAALFFIAATITFLSF. Residues 23-495 lie on the Cytoplasmic side of the membrane; the sequence is RRRRNLPPGP…PLRIIPIVKS (473 aa). Heme is bound at residue Cys437.

The protein belongs to the cytochrome P450 family. The cofactor is heme. In terms of tissue distribution, expression is more abundant in the rhizome.

It localises to the endoplasmic reticulum membrane. It catalyses the reaction abieta-8,11,13-triene + reduced [NADPH--hemoprotein reductase] + O2 = ferruginol + oxidized [NADPH--hemoprotein reductase] + H2O + H(+). In terms of biological role, cytochrome P450 enzyme (CYP) which catalyzes a unique two-electron oxidation cascade on abieta-8,11,13-triene to produce ferruginol, an intermediate in tanshinone biosynthesis. The sequence is that of Ferruginol synthase from Salvia miltiorrhiza (Chinese sage).